Here is a 315-residue protein sequence, read N- to C-terminus: Methionyl-tRNA formyltransferase (315 aa).

Residue 114-117 participates in (6S)-5,6,7,8-tetrahydrofolate binding; it reads SLLP.

This sequence belongs to the Fmt family.

It carries out the reaction L-methionyl-tRNA(fMet) + (6R)-10-formyltetrahydrofolate = N-formyl-L-methionyl-tRNA(fMet) + (6S)-5,6,7,8-tetrahydrofolate + H(+). Functionally, attaches a formyl group to the free amino group of methionyl-tRNA(fMet). The formyl group appears to play a dual role in the initiator identity of N-formylmethionyl-tRNA by promoting its recognition by IF2 and preventing the misappropriation of this tRNA by the elongation apparatus. The sequence is that of Methionyl-tRNA formyltransferase from Corynebacterium efficiens (strain DSM 44549 / YS-314 / AJ 12310 / JCM 11189 / NBRC 100395).